Reading from the N-terminus, the 211-residue chain is Methylthioribulose-1-phosphate dehydratase (211 aa).

Zn(2+)-binding residues include His-105 and His-107.

Belongs to the aldolase class II family. MtnB subfamily. Requires Zn(2+) as cofactor.

It catalyses the reaction 5-(methylsulfanyl)-D-ribulose 1-phosphate = 5-methylsulfanyl-2,3-dioxopentyl phosphate + H2O. Its pathway is amino-acid biosynthesis; L-methionine biosynthesis via salvage pathway; L-methionine from S-methyl-5-thio-alpha-D-ribose 1-phosphate: step 2/6. Its function is as follows. Catalyzes the dehydration of methylthioribulose-1-phosphate (MTRu-1-P) into 2,3-diketo-5-methylthiopentyl-1-phosphate (DK-MTP-1-P). The protein is Methylthioribulose-1-phosphate dehydratase of Acidiphilium cryptum (strain JF-5).